We begin with the raw amino-acid sequence, 455 residues long: Protein FAM124B (455 aa).

A Phosphoserine modification is found at Ser49. The disordered stretch occupies residues Thr270–Gln322. The segment covering Ser313 to Gln322 has biased composition (polar residues).

Belongs to the FAM124 family. Interacts with CHD7 and CHD8.

The protein localises to the nucleus. The chain is Protein FAM124B (FAM124B) from Homo sapiens (Human).